The chain runs to 379 residues: Alanine racemase (379 aa).

Lys41 (proton acceptor; specific for D-alanine) is an active-site residue. Lys41 is modified (N6-(pyridoxal phosphate)lysine). Arg138 is a binding site for substrate. Residue Tyr260 is the Proton acceptor; specific for L-alanine of the active site. Substrate is bound at residue Met319.

Belongs to the alanine racemase family. It depends on pyridoxal 5'-phosphate as a cofactor.

It carries out the reaction L-alanine = D-alanine. Its pathway is amino-acid biosynthesis; D-alanine biosynthesis; D-alanine from L-alanine: step 1/1. Its function is as follows. Catalyzes the interconversion of L-alanine and D-alanine. May also act on other amino acids. The polypeptide is Alanine racemase (alr) (Rhizobium meliloti (strain 1021) (Ensifer meliloti)).